Reading from the N-terminus, the 506-residue chain is UDP-N-acetylmuramoyl-L-alanyl-D-glutamate--2,6-diaminopimelate ligase (506 aa).

S38 serves as a coordination point for UDP-N-acetyl-alpha-D-muramoyl-L-alanyl-D-glutamate. 124-130 (GTNGKTS) provides a ligand contact to ATP. UDP-N-acetyl-alpha-D-muramoyl-L-alanyl-D-glutamate-binding positions include 166–167 (TT), S193, and R201. K233 is modified (N6-carboxylysine). Residues R401, 425–428 (DNPR), G477, and E481 contribute to the meso-2,6-diaminopimelate site. The Meso-diaminopimelate recognition motif signature appears at 425 to 428 (DNPR).

The protein belongs to the MurCDEF family. MurE subfamily. Mg(2+) is required as a cofactor. In terms of processing, carboxylation is probably crucial for Mg(2+) binding and, consequently, for the gamma-phosphate positioning of ATP.

It localises to the cytoplasm. It carries out the reaction UDP-N-acetyl-alpha-D-muramoyl-L-alanyl-D-glutamate + meso-2,6-diaminopimelate + ATP = UDP-N-acetyl-alpha-D-muramoyl-L-alanyl-gamma-D-glutamyl-meso-2,6-diaminopimelate + ADP + phosphate + H(+). It functions in the pathway cell wall biogenesis; peptidoglycan biosynthesis. In terms of biological role, catalyzes the addition of meso-diaminopimelic acid to the nucleotide precursor UDP-N-acetylmuramoyl-L-alanyl-D-glutamate (UMAG) in the biosynthesis of bacterial cell-wall peptidoglycan. The sequence is that of UDP-N-acetylmuramoyl-L-alanyl-D-glutamate--2,6-diaminopimelate ligase from Leptospira interrogans serogroup Icterohaemorrhagiae serovar copenhageni (strain Fiocruz L1-130).